Here is a 110-residue protein sequence, read N- to C-terminus: Body wall hemoglobin (110 aa).

The region spanning Val-2–Phe-110 is the Globin domain. His-70 serves as a coordination point for heme.

The protein belongs to the globin family. As to quaternary structure, homotetramer.

This is Body wall hemoglobin from Cerebratulus lacteus (Milky ribbon worm).